The sequence spans 200 residues: uncharacterized protein (200 aa).

Residues 104 to 124 (SNLLICFLFLCGLYHISVFTG) form a helical membrane-spanning segment.

The protein resides in the membrane. This is an uncharacterized protein from Escherichia coli (strain K12).